The primary structure comprises 217 residues: Glutathione S-transferase (217 aa).

The region spanning 2-82 is the GST N-terminal domain; the sequence is TIKVHGNPRS…YLAYTHDHQN (81 aa). Glutathione contacts are provided by residues Ser-11, 40 to 41, 53 to 54, and 66 to 67; these read HK, QV, and ES. One can recognise a GST C-terminal domain in the interval 91–217; it reads EKHEMAAQLV…EKTLALQKQA (127 aa).

The protein belongs to the GST superfamily. Phi family.

Its subcellular location is the cytoplasm. The catalysed reaction is RX + glutathione = an S-substituted glutathione + a halide anion + H(+). In terms of biological role, conjugation of reduced glutathione to a wide number of exogenous and endogenous hydrophobic electrophiles. This Silene vulgaris (Bladder campion) protein is Glutathione S-transferase (GST).